We begin with the raw amino-acid sequence, 262 residues long: 3-methyl-2-oxobutanoate hydroxymethyltransferase (262 aa).

2 residues coordinate Mg(2+): D44 and D83. Residues 44–45 (DS), D83, and K112 each bind 3-methyl-2-oxobutanoate. A Mg(2+)-binding site is contributed by E114. The Proton acceptor role is filled by E180.

This sequence belongs to the PanB family. As to quaternary structure, homodecamer; pentamer of dimers. Requires Mg(2+) as cofactor.

It localises to the cytoplasm. The enzyme catalyses 3-methyl-2-oxobutanoate + (6R)-5,10-methylene-5,6,7,8-tetrahydrofolate + H2O = 2-dehydropantoate + (6S)-5,6,7,8-tetrahydrofolate. Its pathway is cofactor biosynthesis; (R)-pantothenate biosynthesis; (R)-pantoate from 3-methyl-2-oxobutanoate: step 1/2. Catalyzes the reversible reaction in which hydroxymethyl group from 5,10-methylenetetrahydrofolate is transferred onto alpha-ketoisovalerate to form ketopantoate. This Chromobacterium violaceum (strain ATCC 12472 / DSM 30191 / JCM 1249 / CCUG 213 / NBRC 12614 / NCIMB 9131 / NCTC 9757 / MK) protein is 3-methyl-2-oxobutanoate hydroxymethyltransferase.